Consider the following 146-residue polypeptide: Large ribosomal subunit protein uL15 (146 aa).

The tract at residues 1–54 (MKLHELKPAAGSKKAPKRIGRGTGSGLGRNAGKGEKGQNARSGGGVRPGFEGGQ) is disordered. Composition is skewed to gly residues over residues 21 to 31 (RGTGSGLGRNA) and 42 to 52 (SGGGVRPGFEG).

It belongs to the universal ribosomal protein uL15 family. In terms of assembly, part of the 50S ribosomal subunit.

Functionally, binds to the 23S rRNA. In Clostridium beijerinckii (strain ATCC 51743 / NCIMB 8052) (Clostridium acetobutylicum), this protein is Large ribosomal subunit protein uL15.